The following is a 101-amino-acid chain: Interleukin-8 (101 aa).

A signal peptide spans 1 to 22 (MNSKLAVALLATFLLSLTLCEA). At Arg27 the chain carries Citrulline. 2 cysteine pairs are disulfide-bonded: Cys34–Cys61 and Cys36–Cys77.

The protein belongs to the intercrine alpha (chemokine CxC) family. As to quaternary structure, homodimer. Interacts with TNFAIP6 (via Link domain); this interaction interferes with chemokine binding to glycosaminoglycans. In terms of processing, citrullination at Arg-27 prevents proteolysis, and dampens tissue inflammation, it also enhances leukocytosis, possibly through impaired chemokine clearance from the blood circulation.

The protein localises to the secreted. Functionally, chemotactic factor that mediates inflammatory response by attracting neutrophils, basophils, and T-cells to clear pathogens and protect the host from infection. Also plays an important role in neutrophil activation. Released in response to an inflammatory stimulus, exerts its effect by binding to the G-protein-coupled receptors CXCR1 and CXCR2, primarily found in neutrophils, monocytes and endothelial cells. G-protein heterotrimer (alpha, beta, gamma subunits) constitutively binds to CXCR1/CXCR2 receptor and activation by IL8 leads to beta and gamma subunits release from Galpha (GNAI2 in neutrophils) and activation of several downstream signaling pathways including PI3K and MAPK pathways. This is Interleukin-8 (CXCL8) from Oryctolagus cuniculus (Rabbit).